The sequence spans 877 residues: Probable alpha/beta-glucosidase agdC (877 aa).

The first 14 residues, 1-14 (MLGSLLLLAPLAGA), serve as a signal peptide directing secretion. N-linked (GlcNAc...) asparagine glycosylation is found at Asn171, Asn293, and Asn373. Asp422 functions as the Nucleophile in the catalytic mechanism. Glu425 is an active-site residue. The interval 432-476 (DPCTDPERYSSENNLPPAPPPVRSSSPRPLPGFPADFQPSSASRS) is disordered. Residues 447–463 (PPAPPPVRSSSPRPLPG) are compositionally biased toward pro residues. Asn508 carries N-linked (GlcNAc...) asparagine glycosylation. The Proton donor role is filled by Asp573. 3 N-linked (GlcNAc...) asparagine glycosylation sites follow: Asn574, Asn610, and Asn744.

It belongs to the glycosyl hydrolase 31 family.

The protein resides in the secreted. The enzyme catalyses Hydrolysis of terminal, non-reducing (1-&gt;4)-linked alpha-D-glucose residues with release of alpha-D-glucose.. It catalyses the reaction Hydrolysis of terminal, non-reducing beta-D-glucosyl residues with release of beta-D-glucose.. Functionally, glucosidase involved in the degradation of cellulosic biomass. Has both alpha- and beta-glucosidase activity. The protein is Probable alpha/beta-glucosidase agdC (agdC) of Aspergillus oryzae (strain ATCC 42149 / RIB 40) (Yellow koji mold).